The sequence spans 671 residues: Major S-layer protein (671 aa).

The first 24 residues, 1–24 (MKRFAALSLAALMLLTVFASAASA), serve as a signal peptide directing secretion. 4 N-linked (GlcNAc...) asparagine glycosylation sites follow: N36, N70, N116, and N350. A disordered region spans residues 594–650 (GEEVSGEEETPEETPTGEVTETEGEEETPTEVTETPTEGEPAPEETETTESEGTTPG). Residues 613 to 622 (TETEGEEETP) are compositionally biased toward acidic residues. Residues 623-633 (TEVTETPTEGE) show a composition bias toward low complexity. Over residues 634–643 (PAPEETETTE) the composition is skewed to acidic residues. A helical membrane pass occupies residues 647 to 667 (TTPGFGFMFGLVGLLAVVYLV).

The protein belongs to the Methanosarcinales S-layer protein family. Post-translationally, glycosylated.

The protein resides in the secreted. Its subcellular location is the cell wall. It localises to the S-layer. The protein localises to the cell membrane. Its function is as follows. S-layer protein. The S-layer is a paracrystalline mono-layered assembly of proteins which coat the surface of the cell. The protein is Major S-layer protein of Methanosarcina acetivorans (strain ATCC 35395 / DSM 2834 / JCM 12185 / C2A).